We begin with the raw amino-acid sequence, 201 residues long: Recombination protein RecR (201 aa).

The C4-type zinc finger occupies 60 to 75 (CSCCGNVDTIDPCTVC). Residues 83-178 (SMIIVVEDVS…KTTRLAHGVP (96 aa)) enclose the Toprim domain.

The protein belongs to the RecR family.

Its function is as follows. May play a role in DNA repair. It seems to be involved in an RecBC-independent recombinational process of DNA repair. It may act with RecF and RecO. This chain is Recombination protein RecR, found in Allorhizobium ampelinum (strain ATCC BAA-846 / DSM 112012 / S4) (Agrobacterium vitis (strain S4)).